A 198-amino-acid polypeptide reads, in one-letter code: Acireductone dioxygenase (198 aa).

Positions 97, 99, 103, and 141 each coordinate Fe(2+). The Ni(2+) site is built by H97, H99, E103, and H141.

The protein belongs to the acireductone dioxygenase (ARD) family. As to quaternary structure, monomer. Requires Fe(2+) as cofactor. The cofactor is Ni(2+).

The enzyme catalyses 1,2-dihydroxy-5-(methylsulfanyl)pent-1-en-3-one + O2 = 3-(methylsulfanyl)propanoate + CO + formate + 2 H(+). It carries out the reaction 1,2-dihydroxy-5-(methylsulfanyl)pent-1-en-3-one + O2 = 4-methylsulfanyl-2-oxobutanoate + formate + 2 H(+). The protein operates within amino-acid biosynthesis; L-methionine biosynthesis via salvage pathway; L-methionine from S-methyl-5-thio-alpha-D-ribose 1-phosphate: step 5/6. In terms of biological role, catalyzes 2 different reactions between oxygen and the acireductone 1,2-dihydroxy-3-keto-5-methylthiopentene (DHK-MTPene) depending upon the metal bound in the active site. Fe-containing acireductone dioxygenase (Fe-ARD) produces formate and 2-keto-4-methylthiobutyrate (KMTB), the alpha-ketoacid precursor of methionine in the methionine recycle pathway. Ni-containing acireductone dioxygenase (Ni-ARD) produces methylthiopropionate, carbon monoxide and formate, and does not lie on the methionine recycle pathway. The protein is Acireductone dioxygenase of Synechococcus elongatus (strain ATCC 33912 / PCC 7942 / FACHB-805) (Anacystis nidulans R2).